Here is a 305-residue protein sequence, read N- to C-terminus: Peroxisome assembly protein 26 (305 aa).

Residues 1–20 form a disordered region; the sequence is MKSDSSTSAAPLRGLGGPLR. Over 1–246 the chain is Cytoplasmic; the sequence is MKSDSSTSAA…RQLWDSAVSH (246 aa). Residues 247-267 traverse the membrane as a helical; Signal-anchor for type II membrane protein segment; sequence FFSLPFKKSLLAALILCLLVV. Residues 268–305 are Peroxisomal matrix-facing; it reads RFDPASPSSLHFLYKLAQLFRWIRKAAFSRLYQLRIRD.

Belongs to the peroxin-26 family. As to quaternary structure, interacts (via its cytoplasmic domain) with PEX6; interaction is direct and is ATP-dependent. Interacts with PEX1; interaction is indirect and is mediated via interaction with PEX6. Widely expressed. Highly expressed in kidney, liver, brain and skeletal muscles. Expressed at intermediate level in pancreas, placenta and heart. Weakly expressed in lung.

The protein localises to the peroxisome membrane. Its function is as follows. Peroxisomal docking factor that anchors PEX1 and PEX6 to peroxisome membranes. PEX26 is therefore required for the formation of the PEX1-PEX6 AAA ATPase complex, a complex that mediates the extraction of the PEX5 receptor from peroxisomal membrane. The polypeptide is Peroxisome assembly protein 26 (Homo sapiens (Human)).